Consider the following 198-residue polypeptide: MAKILVLYYSMYGHIETMAHAVAEGAKKVDGAEVIIKRVPETMPPEIFAKAGGKTQNAPVATPQELADYDAIIFGTPTRFGNMSGQMRTFLDQTGGLWASGALYGKLGGVFSSTGTGGGQEQTITSTWTTLAHHGMVIVPIGYSAQELFDVSQVRGGTPYGATTIAGGDGSRQPSQEELSIARYQGEYVAGLAVKLNG.

Residues 4 to 189 (ILVLYYSMYG…SIARYQGEYV (186 aa)) enclose the Flavodoxin-like domain. FMN-binding positions include 10–15 (SMYGHI) and 78–80 (TRF). Tyrosine 12 lines the NAD(+) pocket. Tryptophan 98 is a binding site for substrate. Residues 113 to 118 (STGTGG) and histidine 133 each bind FMN.

It belongs to the WrbA family. FMN serves as cofactor.

It carries out the reaction a quinone + NADH + H(+) = a quinol + NAD(+). The catalysed reaction is a quinone + NADPH + H(+) = a quinol + NADP(+). The sequence is that of NAD(P)H dehydrogenase (quinone) from Salmonella typhi.